The chain runs to 616 residues: Polypeptide N-acetylgalactosaminyltransferase 3 (616 aa).

A helical; Signal-anchor for type II membrane protein membrane pass occupies residues 13-33 (FFHWKLWKFSIIVFVFLVFLF). A catalytic subdomain A region spans residues 182-291 (LPTTSIIIVF…YGWLEPLLAR (110 aa)). Positions 275, 277, and 413 each coordinate Mn(2+). Positions 354 to 416 (PIRTPTFAGG…PCSVVGHVFR (63 aa)) are catalytic subdomain B. N-linked (GlcNAc...) asparagine glycosylation occurs at asparagine 482. A Ricin B-type lectin domain is found at 512–616 (NRMCLDVGEN…FQKWIFGQND (105 aa)). A disulfide bridge connects residues cysteine 515 and cysteine 533. Positions 517, 520, 534, and 539 each coordinate UDP-N-acetyl-alpha-D-galactosamine. Cysteine 588 and cysteine 601 are joined by a disulfide.

Belongs to the glycosyltransferase 2 family. GalNAc-T subfamily. Mn(2+) is required as a cofactor.

The protein localises to the golgi apparatus. The protein resides in the golgi stack membrane. It catalyses the reaction L-seryl-[protein] + UDP-N-acetyl-alpha-D-galactosamine = a 3-O-[N-acetyl-alpha-D-galactosaminyl]-L-seryl-[protein] + UDP + H(+). It carries out the reaction L-threonyl-[protein] + UDP-N-acetyl-alpha-D-galactosamine = a 3-O-[N-acetyl-alpha-D-galactosaminyl]-L-threonyl-[protein] + UDP + H(+). It functions in the pathway protein modification; protein glycosylation. Its function is as follows. Catalyzes the initial reaction in O-linked oligosaccharide biosynthesis, the transfer of an N-acetyl-D-galactosamine residue to a serine or threonine residue on the protein receptor. Glycosylates FGF23. The chain is Polypeptide N-acetylgalactosaminyltransferase 3 (GALNT3) from Taeniopygia guttata (Zebra finch).